A 292-amino-acid chain; its full sequence is Nucleotide-binding protein Ldb0621 (292 aa).

G14–T21 serves as a coordination point for ATP. D64 to V67 provides a ligand contact to GTP.

The protein belongs to the RapZ-like family.

Functionally, displays ATPase and GTPase activities. The polypeptide is Nucleotide-binding protein Ldb0621 (Lactobacillus delbrueckii subsp. bulgaricus (strain ATCC 11842 / DSM 20081 / BCRC 10696 / JCM 1002 / NBRC 13953 / NCIMB 11778 / NCTC 12712 / WDCM 00102 / Lb 14)).